The chain runs to 81 residues: Adenoregulin-related peptide (81 aa).

A signal peptide spans 1–22 (MAFLKKSLLLVLFLGLVSLSIC). The propeptide occupies 23–43 (EEEKRENEDEEEQEDDEQSEM). The disordered stretch occupies residues 24 to 46 (EEKRENEDEEEQEDDEQSEMKRG). The segment covering 30–40 (EDEEEQEDDEQ) has biased composition (acidic residues). Position 78 is an isoleucine amide (Ile78). Positions 79 to 81 (GEQ) are excised as a propeptide.

In terms of tissue distribution, expressed by the skin glands.

Its subcellular location is the secreted. Its function is as follows. Has antibacterial activity against Gram-positive bacterium M.luteus NCT C2665 and against Gram-negative bacterium E.coli K12D31. This Agalychnis callidryas (Red-eyed tree frog) protein is Adenoregulin-related peptide.